The sequence spans 68 residues: Disintegrin EMF10B (68 aa).

The 68-residue stretch at 1–68 (ELLQNSGNPC…SDCPRNPVFK (68 aa)) folds into the Disintegrin domain. Disulfide bonds link Cys10–Cys33, Cys24–Cys30, Cys29–Cys54, and Cys42–Cys61. The Cell attachment site; atypical (MGD) signature appears at 46 to 48 (MGD).

Belongs to the venom metalloproteinase (M12B) family. P-II subfamily. P-IIe sub-subfamily. Heterodimer with EMF10A; disulfide-linked. As to expression, expressed by the venom gland.

Its subcellular location is the secreted. Extremely potent and selective inhibitor of integrin alpha-5/beta-1 (ITGA5/ITGB1). Partially inhibits adhesion of cells expressing alpha-IIb/beta-3 (ITGA2B/ITGB3), alpha-V/beta-3 (ITGAV/ITGB3), and alpha-4/beta-1 (ITGA4/ITGB1) to appropriate ligands only at concentration higher than 500 nM. Weakly inhibits ADP-induced platelet aggregation. The protein is Disintegrin EMF10B of Eristicophis macmahoni (Leaf-nosed viper).